The chain runs to 83 residues: Hainantoxin-III 2 (83 aa).

Positions 1–21 (MKASMYLALAGLVLLFVVGYA) are cleaved as a signal peptide. Positions 22-48 (SESEEKEFPRELLSKIFAVDDFKGEER) are excised as a propeptide. Intrachain disulfides connect C50-C65, C57-C70, and C64-C77. Leucine amide is present on L81.

It belongs to the neurotoxin 10 (Hwtx-1) family. 15 (Hntx-3) subfamily. As to quaternary structure, monomer. In terms of tissue distribution, expressed by the venom gland.

It localises to the secreted. Selective antagonist of neuronal tetrodotoxin (TTX)-sensitive voltage-gated sodium channels (IC(50)=1270 nM on Nav1.1/SCN1A, 270 nM on Nav1.2/SCN2A, 491 nM on Nav1.3/SCN3A and 232 nM on Nav1.7/SCN9A). This toxin suppress Nav1.7 current amplitude without significantly altering the activation, inactivation, and repriming kinetics. Short extreme depolarizations partially activate the toxin-bound channel, indicating voltage-dependent inhibition of this toxin. This toxin increases the deactivation of the Nav1.7 current after extreme depolarizations. The toxin-Nav1.7 complex is gradually dissociated upon prolonged strong depolarizations in a voltage-dependent manner, and the unbound toxin rebinds to Nav1.7 after a long repolarization. Moreover, analysis of chimeric channels showed that the DIIS3-S4 linker is critical for toxin binding to Nav1.7. These data are consistent with this toxin interacting with Nav1.7 site 4 and trapping the domain II voltage sensor in the closed state. This Cyriopagopus hainanus (Chinese bird spider) protein is Hainantoxin-III 2.